The chain runs to 159 residues: Protein-export protein SecB (159 aa).

The protein belongs to the SecB family. In terms of assembly, homotetramer, a dimer of dimers. One homotetramer interacts with 1 SecA dimer.

It localises to the cytoplasm. One of the proteins required for the normal export of preproteins out of the cell cytoplasm. It is a molecular chaperone that binds to a subset of precursor proteins, maintaining them in a translocation-competent state. It also specifically binds to its receptor SecA. This Nitrobacter winogradskyi (strain ATCC 25391 / DSM 10237 / CIP 104748 / NCIMB 11846 / Nb-255) protein is Protein-export protein SecB.